The primary structure comprises 290 residues: 4-diphosphocytidyl-2-C-methyl-D-erythritol kinase (290 aa).

Lys8 is an active-site residue. 89-99 serves as a coordination point for ATP; sequence PIGAGVGGGSS. Asp131 is an active-site residue.

Belongs to the GHMP kinase family. IspE subfamily.

It catalyses the reaction 4-CDP-2-C-methyl-D-erythritol + ATP = 4-CDP-2-C-methyl-D-erythritol 2-phosphate + ADP + H(+). The protein operates within isoprenoid biosynthesis; isopentenyl diphosphate biosynthesis via DXP pathway; isopentenyl diphosphate from 1-deoxy-D-xylulose 5-phosphate: step 3/6. In terms of biological role, catalyzes the phosphorylation of the position 2 hydroxy group of 4-diphosphocytidyl-2C-methyl-D-erythritol. This Chlamydia felis (strain Fe/C-56) (Chlamydophila felis) protein is 4-diphosphocytidyl-2-C-methyl-D-erythritol kinase.